Here is a 436-residue protein sequence, read N- to C-terminus: Serine hydroxymethyltransferase (436 aa).

Residues L133 and 137-139 (GHI) each bind (6S)-5,6,7,8-tetrahydrofolate. At K242 the chain carries N6-(pyridoxal phosphate)lysine.

Belongs to the SHMT family. Homodimer. Requires pyridoxal 5'-phosphate as cofactor.

The protein localises to the cytoplasm. It catalyses the reaction (6R)-5,10-methylene-5,6,7,8-tetrahydrofolate + glycine + H2O = (6S)-5,6,7,8-tetrahydrofolate + L-serine. It participates in one-carbon metabolism; tetrahydrofolate interconversion. The protein operates within amino-acid biosynthesis; glycine biosynthesis; glycine from L-serine: step 1/1. Catalyzes the reversible interconversion of serine and glycine with tetrahydrofolate (THF) serving as the one-carbon carrier. This reaction serves as the major source of one-carbon groups required for the biosynthesis of purines, thymidylate, methionine, and other important biomolecules. Also exhibits THF-independent aldolase activity toward beta-hydroxyamino acids, producing glycine and aldehydes, via a retro-aldol mechanism. In Pelagibacter ubique (strain HTCC1062), this protein is Serine hydroxymethyltransferase.